The chain runs to 193 residues: Orotate phosphoribosyltransferase (193 aa).

A 5-phospho-alpha-D-ribose 1-diphosphate-binding site is contributed by 114–122 (EDVITTGGS). 2 residues coordinate orotate: Thr-118 and Arg-146.

This sequence belongs to the purine/pyrimidine phosphoribosyltransferase family. PyrE subfamily. In terms of assembly, homodimer. The cofactor is Mg(2+).

It carries out the reaction orotidine 5'-phosphate + diphosphate = orotate + 5-phospho-alpha-D-ribose 1-diphosphate. It functions in the pathway pyrimidine metabolism; UMP biosynthesis via de novo pathway; UMP from orotate: step 1/2. Functionally, catalyzes the transfer of a ribosyl phosphate group from 5-phosphoribose 1-diphosphate to orotate, leading to the formation of orotidine monophosphate (OMP). The sequence is that of Orotate phosphoribosyltransferase from Chlorobium phaeobacteroides (strain DSM 266 / SMG 266 / 2430).